The chain runs to 257 residues: MLILVSPAKTLDFEQPPLTQTHTRPDFLAYSQELIQVCQRLTPSDIATLMKVSDNIAGLNAARFGEWTPDYSIANAKQAIFAFRGDVYTGVDADTLTPEQLERTQSQLRILSGLYGLLRPLDLILPYRLEMGTALANPKGKNLYDFWGNILTEAVNRAVAEQGDELIINLASNEYFKAVKPKQLTGQLITPVFKDFKNGQYKVISFFAKKARGMMARYIIDQQVSSIDELKAFDVAGYYYSEELSKPNEPTFLREAQ.

It belongs to the UPF0246 family.

In Shewanella sp. (strain MR-4), this protein is UPF0246 protein Shewmr4_2963.